We begin with the raw amino-acid sequence, 595 residues long: Protein UL31 (595 aa).

Residues 1–23 form the signal peptide; it reads MGDKPTLVTLLTVAVSSPPPSSP. Residues 47–94 are disordered; that stretch reads TATSEVGEKTAEQEVAAADPETGNERRENRENEGGETRTTGTTAVKRS. Over residues 69-82 the composition is skewed to basic and acidic residues; that stretch reads GNERRENRENEGGE. Residues asparagine 176 and asparagine 197 are each glycosylated (N-linked (GlcNAc...) asparagine; by host).

Belongs to the herpesviridae U10 family. Interacts with host CGAS.

It is found in the host cytoplasm. The protein localises to the host nucleus. Plays a role in the inhibition of host innate immune system by targeting host CGAS and promoting dissociation of DNA from CGAS, thereby inhibiting the enzymatic activity of CGAS. The sequence is that of Protein UL31 from Homo sapiens (Human).